A 764-amino-acid chain; its full sequence is 5-methyltetrahydropteroyltriglutamate--homocysteine methyltransferase (764 aa).

Residues 17 to 20 (RELK) and Lys117 contribute to the 5-methyltetrahydropteroyltri-L-glutamate site. Residues 437-439 (IGS) and Glu490 each bind L-homocysteine. Residues 437–439 (IGS) and Glu490 each bind L-methionine. Residues 521 to 522 (RC) and Trp567 contribute to the 5-methyltetrahydropteroyltri-L-glutamate site. Asp605 is a binding site for L-homocysteine. Asp605 provides a ligand contact to L-methionine. Glu611 provides a ligand contact to 5-methyltetrahydropteroyltri-L-glutamate. Residues His647, Cys649, and Glu671 each coordinate Zn(2+). Catalysis depends on His701, which acts as the Proton donor. Cys733 is a Zn(2+) binding site.

Belongs to the vitamin-B12 independent methionine synthase family. Zn(2+) is required as a cofactor.

It carries out the reaction 5-methyltetrahydropteroyltri-L-glutamate + L-homocysteine = tetrahydropteroyltri-L-glutamate + L-methionine. It functions in the pathway amino-acid biosynthesis; L-methionine biosynthesis via de novo pathway; L-methionine from L-homocysteine (MetE route): step 1/1. Functionally, catalyzes the transfer of a methyl group from 5-methyltetrahydrofolate to homocysteine resulting in methionine formation. In Blochmanniella pennsylvanica (strain BPEN), this protein is 5-methyltetrahydropteroyltriglutamate--homocysteine methyltransferase.